Consider the following 247-residue polypeptide: UPF0273 protein PH0284 (247 aa).

In terms of domain architecture, KaiC spans 3–247; sequence RRVKTGIPGV…VLKRGKVLEL (245 aa). 30–37 serves as a coordination point for ATP; sequence GGPGTGKT.

Belongs to the UPF0273 family.

This chain is UPF0273 protein PH0284, found in Pyrococcus horikoshii (strain ATCC 700860 / DSM 12428 / JCM 9974 / NBRC 100139 / OT-3).